The sequence spans 972 residues: Isoleucine--tRNA ligase (972 aa).

The short motif at 63 to 73 (PYANGNIHIGH) is the 'HIGH' region element. Glu603 contacts L-isoleucyl-5'-AMP. Residues 644-648 (KMSKS) carry the 'KMSKS' region motif. Lys647 contacts ATP.

The protein belongs to the class-I aminoacyl-tRNA synthetase family. IleS type 1 subfamily. As to quaternary structure, monomer.

The protein resides in the cytoplasm. It carries out the reaction tRNA(Ile) + L-isoleucine + ATP = L-isoleucyl-tRNA(Ile) + AMP + diphosphate. In terms of biological role, catalyzes the attachment of isoleucine to tRNA(Ile). As IleRS can inadvertently accommodate and process structurally similar amino acids such as valine, to avoid such errors it has two additional distinct tRNA(Ile)-dependent editing activities. One activity is designated as 'pretransfer' editing and involves the hydrolysis of activated Val-AMP. The other activity is designated 'posttransfer' editing and involves deacylation of mischarged Val-tRNA(Ile). This chain is Isoleucine--tRNA ligase, found in Brucella melitensis biotype 1 (strain ATCC 23456 / CCUG 17765 / NCTC 10094 / 16M).